A 129-amino-acid chain; its full sequence is Lysozyme C (129 aa).

The region spanning 1 to 129 is the C-type lysozyme domain; that stretch reads KVYGRCELAA…VHAWIRGCRL (129 aa). 4 cysteine pairs are disulfide-bonded: cysteine 6–cysteine 127, cysteine 30–cysteine 115, cysteine 64–cysteine 80, and cysteine 76–cysteine 94. Catalysis depends on residues glutamate 35 and aspartate 52.

Belongs to the glycosyl hydrolase 22 family. As to quaternary structure, monomer.

The protein resides in the secreted. It carries out the reaction Hydrolysis of (1-&gt;4)-beta-linkages between N-acetylmuramic acid and N-acetyl-D-glucosamine residues in a peptidoglycan and between N-acetyl-D-glucosamine residues in chitodextrins.. In terms of biological role, lysozymes have primarily a bacteriolytic function; those in tissues and body fluids are associated with the monocyte-macrophage system and enhance the activity of immunoagents. This is Lysozyme C (LYZ) from Pavo cristatus (Indian peafowl).